The following is a 369-amino-acid chain: Probable dual-specificity RNA methyltransferase RlmN (369 aa).

Glu108 acts as the Proton acceptor in catalysis. In terms of domain architecture, Radical SAM core spans 114–351 (YPDRATLCIS…LAQGVSCTVR (238 aa)). Residues Cys121 and Cys362 are joined by a disulfide bond. [4Fe-4S] cluster-binding residues include Cys128, Cys132, and Cys135. S-adenosyl-L-methionine contacts are provided by residues 183-184 (GE), Ser217, 240-242 (SLH), and Asn319. Cys362 (S-methylcysteine intermediate) is an active-site residue.

The protein belongs to the radical SAM superfamily. RlmN family. [4Fe-4S] cluster serves as cofactor.

It is found in the cytoplasm. The enzyme catalyses adenosine(2503) in 23S rRNA + 2 reduced [2Fe-2S]-[ferredoxin] + 2 S-adenosyl-L-methionine = 2-methyladenosine(2503) in 23S rRNA + 5'-deoxyadenosine + L-methionine + 2 oxidized [2Fe-2S]-[ferredoxin] + S-adenosyl-L-homocysteine. It carries out the reaction adenosine(37) in tRNA + 2 reduced [2Fe-2S]-[ferredoxin] + 2 S-adenosyl-L-methionine = 2-methyladenosine(37) in tRNA + 5'-deoxyadenosine + L-methionine + 2 oxidized [2Fe-2S]-[ferredoxin] + S-adenosyl-L-homocysteine. Functionally, specifically methylates position 2 of adenine 2503 in 23S rRNA and position 2 of adenine 37 in tRNAs. The sequence is that of Probable dual-specificity RNA methyltransferase RlmN from Rhodococcus jostii (strain RHA1).